Here is a 292-residue protein sequence, read N- to C-terminus: tRNA (guanine-N(7)-)-methyltransferase (292 aa).

Residues 1–54 (MLKRDQSEMDIEAETANMGKEEKESFVHKRQKYRQEQEEKRLAAKKGVSFEQPE) are disordered. A compositionally biased stretch (basic and acidic residues) spans 19 to 42 (GKEEKESFVHKRQKYRQEQEEKRL). S-adenosyl-L-methionine contacts are provided by residues Gly110, 133–134 (EI), 168–169 (NA), and Cys188. Asp191 is a catalytic residue. Residue 266-268 (TEE) participates in S-adenosyl-L-methionine binding.

This sequence belongs to the class I-like SAM-binding methyltransferase superfamily. TrmB family. As to quaternary structure, forms a complex with TRM82.

The protein resides in the nucleus. The enzyme catalyses guanosine(46) in tRNA + S-adenosyl-L-methionine = N(7)-methylguanosine(46) in tRNA + S-adenosyl-L-homocysteine. It participates in tRNA modification; N(7)-methylguanine-tRNA biosynthesis. Its function is as follows. Catalyzes the formation of N(7)-methylguanine at position 46 (m7G46) in tRNA. The sequence is that of tRNA (guanine-N(7)-)-methyltransferase from Yarrowia lipolytica (strain CLIB 122 / E 150) (Yeast).